Here is a 216-residue protein sequence, read N- to C-terminus: Uracil phosphoribosyltransferase (216 aa).

5-phospho-alpha-D-ribose 1-diphosphate is bound by residues Arg85, Arg110, and 135–143 (DPMVATGYS). Residues Ile200 and 205–207 (GDA) each bind uracil. Asp206 provides a ligand contact to 5-phospho-alpha-D-ribose 1-diphosphate.

Belongs to the UPRTase family. It depends on Mg(2+) as a cofactor.

The catalysed reaction is UMP + diphosphate = 5-phospho-alpha-D-ribose 1-diphosphate + uracil. The protein operates within pyrimidine metabolism; UMP biosynthesis via salvage pathway; UMP from uracil: step 1/1. With respect to regulation, allosterically activated by GTP. Catalyzes the conversion of uracil and 5-phospho-alpha-D-ribose 1-diphosphate (PRPP) to UMP and diphosphate. In Ralstonia pickettii (strain 12J), this protein is Uracil phosphoribosyltransferase.